The sequence spans 500 residues: Lysine--tRNA ligase (500 aa).

Residues E410 and E417 each contribute to the Mg(2+) site.

The protein belongs to the class-II aminoacyl-tRNA synthetase family. In terms of assembly, homodimer. Requires Mg(2+) as cofactor.

It is found in the cytoplasm. The enzyme catalyses tRNA(Lys) + L-lysine + ATP = L-lysyl-tRNA(Lys) + AMP + diphosphate. In Shewanella putrefaciens (strain CN-32 / ATCC BAA-453), this protein is Lysine--tRNA ligase.